A 782-amino-acid chain; its full sequence is Phosphoribosylformylglycinamidine synthase subunit PurL (782 aa).

Histidine 48 is an active-site residue. ATP-binding residues include tyrosine 51 and lysine 90. Glutamate 92 provides a ligand contact to Mg(2+). Substrate is bound by residues 93 to 96 (SHNH) and arginine 115. Residue histidine 94 is the Proton acceptor of the active site. Aspartate 116 provides a ligand contact to Mg(2+). Glutamine 239 is a substrate binding site. Aspartate 267 contributes to the Mg(2+) binding site. 311 to 313 (ESQ) lines the substrate pocket. Residues aspartate 525 and glycine 562 each coordinate ATP. Asparagine 563 contacts Mg(2+). Serine 565 contributes to the substrate binding site.

It belongs to the FGAMS family. Monomer. Part of the FGAM synthase complex composed of 1 PurL, 1 PurQ and 2 PurS subunits.

It localises to the cytoplasm. The enzyme catalyses N(2)-formyl-N(1)-(5-phospho-beta-D-ribosyl)glycinamide + L-glutamine + ATP + H2O = 2-formamido-N(1)-(5-O-phospho-beta-D-ribosyl)acetamidine + L-glutamate + ADP + phosphate + H(+). Its pathway is purine metabolism; IMP biosynthesis via de novo pathway; 5-amino-1-(5-phospho-D-ribosyl)imidazole from N(2)-formyl-N(1)-(5-phospho-D-ribosyl)glycinamide: step 1/2. Part of the phosphoribosylformylglycinamidine synthase complex involved in the purines biosynthetic pathway. Catalyzes the ATP-dependent conversion of formylglycinamide ribonucleotide (FGAR) and glutamine to yield formylglycinamidine ribonucleotide (FGAM) and glutamate. The FGAM synthase complex is composed of three subunits. PurQ produces an ammonia molecule by converting glutamine to glutamate. PurL transfers the ammonia molecule to FGAR to form FGAM in an ATP-dependent manner. PurS interacts with PurQ and PurL and is thought to assist in the transfer of the ammonia molecule from PurQ to PurL. This chain is Phosphoribosylformylglycinamidine synthase subunit PurL, found in Nostoc sp. (strain PCC 7120 / SAG 25.82 / UTEX 2576).